The chain runs to 24 residues: Brevinin-1SPa (24 aa).

Cys-18 and Cys-24 are oxidised to a cystine.

As to expression, expressed by the skin glands.

The protein localises to the secreted. Its function is as follows. Antimicrobial peptide with activity against Gram-negative and Gram-positive bacteria (MIC=13 uM against E.coli, MIC=3 uM against S.aureus) and fungi (MIC=6 uM against C.albicans). Shows hemolytic activity on human erythrocytes (HC(50)=7 uM). In Lithobates septentrionalis (Mink frog), this protein is Brevinin-1SPa.